The following is a 583-amino-acid chain: Pre-mRNA-processing protein 45 (583 aa).

4 disordered regions span residues 1-68, 177-253, 321-424, and 519-583; these read MTSI…APED, KPKN…LTAE, MQQR…EQNR, and RGAA…DEEN. Residues 203 to 225 show a composition bias toward basic and acidic residues; it reads TSRKNDRIMKIVERQQDPMEPPK. The segment covering 233–244 has biased composition (pro residues); the sequence is RGPPSPPPPIMH. Residues 325–350 show a composition bias toward basic and acidic residues; it reads LAEKEKAQKEEHLRALAQKAREERSR. A compositionally biased stretch (low complexity) spans 367 to 377; sequence RSYSDASSRSR. Composition is skewed to basic and acidic residues over residues 386–424, 519–538, and 569–583; these read ARER…EQNR, RGAA…KDTA, and PDSR…DEEN.

The protein belongs to the SNW family. In terms of assembly, associated with the spliceosome.

Its subcellular location is the nucleus. In terms of biological role, involved in pre-mRNA splicing. This Emericella nidulans (strain FGSC A4 / ATCC 38163 / CBS 112.46 / NRRL 194 / M139) (Aspergillus nidulans) protein is Pre-mRNA-processing protein 45 (prp45).